A 342-amino-acid polypeptide reads, in one-letter code: MTKSLFRQSFLTDTLDVHIDVAPAEQVLSNGVKLKLYQRGVLEVIPEEYTQETKNVIISCGVHGDETAPMELVDSIIKDIESGFQKVEARCLFIIAHPESTLAHSRFLEENLNRLFDEKEHEPTKELAIADTLKLLVRDFYQDTAAETRWHLDLHCAIRASKHYTFAVSPKTRHPVRSKALIDFLDSAHIEAVLLSNSPTSTFSWFSAENYGAQALTMELGRVARIGENDLDKLTAFDLSLRNLIAESKAEHLSKPCIKYRVSRTIVRLHEDFDFMFDDNVENFTSFVHGEVFGHDGDKPLMAKNDNEAVVFPNRHVAIGQRAALMVCEVKTRYEDGELVYD.

The Zn(2+) site is built by H63, E66, and H155. Residue E219 is part of the active site.

Belongs to the AspA/AstE family. Succinylglutamate desuccinylase subfamily. The cofactor is Zn(2+).

The catalysed reaction is N-succinyl-L-glutamate + H2O = L-glutamate + succinate. It functions in the pathway amino-acid degradation; L-arginine degradation via AST pathway; L-glutamate and succinate from L-arginine: step 5/5. Transforms N(2)-succinylglutamate into succinate and glutamate. In Vibrio campbellii (strain ATCC BAA-1116), this protein is Succinylglutamate desuccinylase.